The sequence spans 478 residues: NAD(+) hydrolase ThsA (478 aa).

Residues 1-287 (MDKKVLIKRF…SIRKKYLRKT (287 aa)) enclose the Deacetylase sirtuin-type domain. NAD(+)-binding residues include Ala19, Asp110, and His148. The active-site Proton acceptor is His148. The tract at residues 288 to 478 (IFISGSAVDY…VSLINSIQED (191 aa)) is SLOG (STALD) domain. 7 residues coordinate 3'cADPR: Gly292, Ser293, Leu330, Arg373, Lys390, Gly401, and Glu405.

Belongs to the soluble Thoeris ThsA family. As to quaternary structure, homotetramer in solution.

The catalysed reaction is NAD(+) + H2O = ADP-D-ribose + nicotinamide + H(+). With respect to regulation, activated by 3'cADPR. Its function is as follows. NAD(+) hydrolyzing component (NADase) of the Thoeris antiviral defense system, composed of ThsA and ThsB (maybe AS248_15445). Activated by 3' cyclic ADP-D-ribose (3'cADPR) but not its isomers 2'cADPR, cADPR and very weakly by ADPR; binds 3'cADPR better than 2'cADPR. Upon activation binds and hydrolyzes NAD(+), leading to cell death and inhibition of phage replication. In Enterococcus faecium (Streptococcus faecium), this protein is NAD(+) hydrolase ThsA.